Reading from the N-terminus, the 387-residue chain is 1-deoxy-D-xylulose 5-phosphate reductoisomerase (387 aa).

NADPH contacts are provided by Thr10, Gly11, Ser12, Ile13, Gly36, Lys37, Asn38, and Asn123. Residue Lys124 participates in 1-deoxy-D-xylulose 5-phosphate binding. NADPH is bound at residue Glu125. Asp149 contacts Mn(2+). 1-deoxy-D-xylulose 5-phosphate-binding residues include Ser150, Glu151, Ser175, and His198. Glu151 lines the Mn(2+) pocket. Position 204 (Gly204) interacts with NADPH. Ser211, Asn216, Lys217, and Glu220 together coordinate 1-deoxy-D-xylulose 5-phosphate. Mn(2+) is bound at residue Glu220.

It belongs to the DXR family. It depends on Mg(2+) as a cofactor. Mn(2+) is required as a cofactor.

It catalyses the reaction 2-C-methyl-D-erythritol 4-phosphate + NADP(+) = 1-deoxy-D-xylulose 5-phosphate + NADPH + H(+). Its pathway is isoprenoid biosynthesis; isopentenyl diphosphate biosynthesis via DXP pathway; isopentenyl diphosphate from 1-deoxy-D-xylulose 5-phosphate: step 1/6. Its function is as follows. Catalyzes the NADPH-dependent rearrangement and reduction of 1-deoxy-D-xylulose-5-phosphate (DXP) to 2-C-methyl-D-erythritol 4-phosphate (MEP). The chain is 1-deoxy-D-xylulose 5-phosphate reductoisomerase from Pelotomaculum thermopropionicum (strain DSM 13744 / JCM 10971 / SI).